The primary structure comprises 124 residues: Hemoglobin subunit alpha (124 aa).

One can recognise a Globin domain in the interval 1–124 (PLSAADKTII…VAKALSSHYR (124 aa)). Residue His-57 participates in O2 binding. Heme b is bound at residue His-79.

The protein belongs to the globin family. As to quaternary structure, hb 1 is a heterotetramer of two alpha and two beta-1 chains. Hb 2 is a heterotetramer of two alpha and two beta-2 chains. Hb 3 is a heterotetramer of two alpha and two beta-3 chains. In terms of tissue distribution, red blood cells (at protein level).

Involved in oxygen transport from gills to the various peripheral tissues. The polypeptide is Hemoglobin subunit alpha (Somniosus microcephalus (Greenland sleeper shark)).